Here is a 254-residue protein sequence, read N- to C-terminus: RING-H2 finger protein ATL28 (254 aa).

Residues 25-45 (VVLTGVLLFVIFAGFFSLFLW) form a helical membrane-spanning segment. The RING-type; atypical zinc finger occupies 103–145 (CAICLSEFSDEDTVRLITVCRHPFHSNCIDLWFELHKTCPVCR).

It belongs to the RING-type zinc finger family. ATL subfamily.

It localises to the membrane. It catalyses the reaction S-ubiquitinyl-[E2 ubiquitin-conjugating enzyme]-L-cysteine + [acceptor protein]-L-lysine = [E2 ubiquitin-conjugating enzyme]-L-cysteine + N(6)-ubiquitinyl-[acceptor protein]-L-lysine.. Its pathway is protein modification; protein ubiquitination. In Arabidopsis thaliana (Mouse-ear cress), this protein is RING-H2 finger protein ATL28 (ATL28).